Here is a 175-residue protein sequence, read N- to C-terminus: Small ribosomal subunit protein uS7 (175 aa).

Belongs to the universal ribosomal protein uS7 family. In terms of assembly, part of the 30S ribosomal subunit. Contacts proteins S9 and S11.

Functionally, one of the primary rRNA binding proteins, it binds directly to 16S rRNA where it nucleates assembly of the head domain of the 30S subunit. Is located at the subunit interface close to the decoding center, probably blocks exit of the E-site tRNA. The protein is Small ribosomal subunit protein uS7 of Legionella pneumophila (strain Paris).